Consider the following 300-residue polypeptide: Porphobilinogen deaminase (300 aa).

S-(dipyrrolylmethanemethyl)cysteine is present on Cys239.

Belongs to the HMBS family. In terms of assembly, monomer. Dipyrromethane is required as a cofactor.

It catalyses the reaction 4 porphobilinogen + H2O = hydroxymethylbilane + 4 NH4(+). Its pathway is porphyrin-containing compound metabolism; protoporphyrin-IX biosynthesis; coproporphyrinogen-III from 5-aminolevulinate: step 2/4. Functionally, tetrapolymerization of the monopyrrole PBG into the hydroxymethylbilane pre-uroporphyrinogen in several discrete steps. The protein is Porphobilinogen deaminase of Francisella tularensis subsp. tularensis (strain FSC 198).